Here is a 335-residue protein sequence, read N- to C-terminus: Ketol-acid reductoisomerase (NADP(+)) (335 aa).

The 181-residue stretch at 2–182 (AKIIYDNETT…GATRAGVYET (181 aa)) folds into the KARI N-terminal Rossmann domain. Residues 25–28 (YGSQ), Arg-48, Ser-51, Ser-53, and 83–86 (DENQ) contribute to the NADP(+) site. Residue His-108 is part of the active site. Gly-134 is a binding site for NADP(+). Positions 183–328 (TFREETETDL…KQIRANIPWL (146 aa)) constitute a KARI C-terminal knotted domain. The Mg(2+) site is built by Asp-191, Glu-195, Glu-227, and Glu-231. A substrate-binding site is contributed by Ser-252.

This sequence belongs to the ketol-acid reductoisomerase family. The cofactor is Mg(2+).

The catalysed reaction is (2R)-2,3-dihydroxy-3-methylbutanoate + NADP(+) = (2S)-2-acetolactate + NADPH + H(+). The enzyme catalyses (2R,3R)-2,3-dihydroxy-3-methylpentanoate + NADP(+) = (S)-2-ethyl-2-hydroxy-3-oxobutanoate + NADPH + H(+). Its pathway is amino-acid biosynthesis; L-isoleucine biosynthesis; L-isoleucine from 2-oxobutanoate: step 2/4. It participates in amino-acid biosynthesis; L-valine biosynthesis; L-valine from pyruvate: step 2/4. Involved in the biosynthesis of branched-chain amino acids (BCAA). Catalyzes an alkyl-migration followed by a ketol-acid reduction of (S)-2-acetolactate (S2AL) to yield (R)-2,3-dihydroxy-isovalerate. In the isomerase reaction, S2AL is rearranged via a Mg-dependent methyl migration to produce 3-hydroxy-3-methyl-2-ketobutyrate (HMKB). In the reductase reaction, this 2-ketoacid undergoes a metal-dependent reduction by NADPH to yield (R)-2,3-dihydroxy-isovalerate. In Methanosarcina barkeri (strain Fusaro / DSM 804), this protein is Ketol-acid reductoisomerase (NADP(+)).